The following is a 385-amino-acid chain: Lipid-A-disaccharide synthase (385 aa).

The protein belongs to the LpxB family.

It carries out the reaction a lipid X + a UDP-2-N,3-O-bis[(3R)-3-hydroxyacyl]-alpha-D-glucosamine = a lipid A disaccharide + UDP + H(+). It functions in the pathway bacterial outer membrane biogenesis; LPS lipid A biosynthesis. Functionally, condensation of UDP-2,3-diacylglucosamine and 2,3-diacylglucosamine-1-phosphate to form lipid A disaccharide, a precursor of lipid A, a phosphorylated glycolipid that anchors the lipopolysaccharide to the outer membrane of the cell. This Rickettsia canadensis (strain McKiel) protein is Lipid-A-disaccharide synthase.